The primary structure comprises 277 residues: Large ribosomal subunit protein uL2 (277 aa).

Disordered stretches follow at residues 1–23 (MAIK…DFAE), 36–58 (PLHK…GGGH), and 219–277 (TVRG…RKNK). A compositionally biased stretch (polar residues) spans 8-20 (PTSNGRRGMTSSD). The span at 258-277 (KTRKKKNKSDKFIVRRRKNK) shows a compositional bias: basic residues.

This sequence belongs to the universal ribosomal protein uL2 family. Part of the 50S ribosomal subunit. Forms a bridge to the 30S subunit in the 70S ribosome.

Its function is as follows. One of the primary rRNA binding proteins. Required for association of the 30S and 50S subunits to form the 70S ribosome, for tRNA binding and peptide bond formation. It has been suggested to have peptidyltransferase activity; this is somewhat controversial. Makes several contacts with the 16S rRNA in the 70S ribosome. The protein is Large ribosomal subunit protein uL2 of Bacillus licheniformis (strain ATCC 14580 / DSM 13 / JCM 2505 / CCUG 7422 / NBRC 12200 / NCIMB 9375 / NCTC 10341 / NRRL NRS-1264 / Gibson 46).